The following is a 286-amino-acid chain: DegV domain-containing protein SPs1668 (286 aa).

In terms of domain architecture, DegV spans 3 to 282; that stretch reads FTIMTDSTAD…PNTLAVFVIG (280 aa). Residues Thr62 and Ser94 each coordinate hexadecanoate.

Its function is as follows. May bind long-chain fatty acids, such as palmitate, and may play a role in lipid transport or fatty acid metabolism. The protein is DegV domain-containing protein SPs1668 of Streptococcus pyogenes serotype M3 (strain SSI-1).